We begin with the raw amino-acid sequence, 378 residues long: Transmembrane 6 superfamily member 2 (378 aa).

Helical transmembrane passes span L34 to L54, P63 to L83, I110 to A130, L140 to I160, P170 to F190, L219 to V239, M269 to F289, G291 to F311, and T332 to L352. EXPERA domains are found at residues Y61–G186 and A217–A351.

The protein belongs to the TM6SF family.

It is found in the endoplasmic reticulum membrane. Its subcellular location is the endoplasmic reticulum-Golgi intermediate compartment membrane. Its function is as follows. Regulator of liver fat metabolism influencing triglyceride secretion and hepatic lipid droplet content. May function as sterol isomerase. This Rattus norvegicus (Rat) protein is Transmembrane 6 superfamily member 2 (Tm6sf2).